Here is a 225-residue protein sequence, read N- to C-terminus: Lectin (225 aa).

Homotetramer.

Chitin-binding lectin. Agglutinates rabbit erythrocytes, but not human erythrocytes. This chain is Lectin, found in Vachellia farnesiana (Sweet acacia).